A 344-amino-acid chain; its full sequence is Phenylalanine--tRNA ligase alpha subunit (344 aa).

Glu256 is a binding site for Mg(2+).

This sequence belongs to the class-II aminoacyl-tRNA synthetase family. Phe-tRNA synthetase alpha subunit type 1 subfamily. As to quaternary structure, tetramer of two alpha and two beta subunits. It depends on Mg(2+) as a cofactor.

The protein resides in the cytoplasm. The enzyme catalyses tRNA(Phe) + L-phenylalanine + ATP = L-phenylalanyl-tRNA(Phe) + AMP + diphosphate + H(+). This Bacillus anthracis (strain CDC 684 / NRRL 3495) protein is Phenylalanine--tRNA ligase alpha subunit.